Reading from the N-terminus, the 270-residue chain is Phosphonates import ATP-binding protein PhnC (270 aa).

The 244-residue stretch at leucine 2–alanine 245 folds into the ABC transporter domain. An ATP-binding site is contributed by glycine 34–serine 41.

This sequence belongs to the ABC transporter superfamily. Phosphonates importer (TC 3.A.1.9.1) family. In terms of assembly, the complex is composed of two ATP-binding proteins (PhnC), two transmembrane proteins (PhnE) and a solute-binding protein (PhnD).

Its subcellular location is the cell inner membrane. The catalysed reaction is phosphonate(out) + ATP + H2O = phosphonate(in) + ADP + phosphate + H(+). Functionally, part of the ABC transporter complex PhnCDE involved in phosphonates import. Responsible for energy coupling to the transport system. The polypeptide is Phosphonates import ATP-binding protein PhnC (Rhodopseudomonas palustris (strain BisB5)).